The sequence spans 484 residues: Threonine synthase-like 2 (484 aa).

At lysine 113 the chain carries N6-(pyridoxal phosphate)lysine.

The protein belongs to the threonine synthase family. It depends on pyridoxal 5'-phosphate as a cofactor.

Its function is as follows. Acts as a catabolic phospho-lyase on both gamma- and beta-phosphorylated substrates. Degrades O-phospho-threonine (PThr) to alpha-ketobutyrate, ammonia and phosphate. The protein is Threonine synthase-like 2 (THNSL2) of Pongo abelii (Sumatran orangutan).